We begin with the raw amino-acid sequence, 483 residues long: FAD-linked oxidoreductase easE (483 aa).

The FAD-binding PCMH-type domain maps to 10-193 (QGRLPLYSAV…TEATVRVFSD (184 aa)).

This sequence belongs to the oxygen-dependent FAD-linked oxidoreductase family. It depends on FAD as a cofactor.

Its pathway is alkaloid biosynthesis; ergot alkaloid biosynthesis. Functionally, FAD-linked oxidoreductase; part of the gene cluster that mediates the biosynthesis of fungal ergot alkaloid. DmaW catalyzes the first step of ergot alkaloid biosynthesis by condensing dimethylallyl diphosphate (DMAP) and tryptophan to form 4-dimethylallyl-L-tryptophan. The second step is catalyzed by the methyltransferase easF that methylates 4-dimethylallyl-L-tryptophan in the presence of S-adenosyl-L-methionine, resulting in the formation of 4-dimethylallyl-L-abrine. The catalase easC and the FAD-dependent oxidoreductase easE then transform 4-dimethylallyl-L-abrine to chanoclavine-I which is further oxidized by easD in the presence of NAD(+), resulting in the formation of chanoclavine-I aldehyde. Agroclavine dehydrogenase easG then mediates the conversion of chanoclavine-I aldehyde to agroclavine via a non-enzymatic adduct reaction: the substrate is an iminium intermediate that is formed spontaneously from chanoclavine-I aldehyde in the presence of glutathione. The presence of easA is not required to complete this reaction. Further conversion of agroclavine to paspalic acid is a two-step process involving oxidation of agroclavine to elymoclavine and of elymoclavine to paspalic acid, the second step being performed by the elymoclavine oxidase cloA. Paspalic acid is then further converted to D-lysergic acid. Ergopeptines are assembled from D-lysergic acid and three different amino acids by the D-lysergyl-peptide-synthetases composed each of a monomudular and a trimodular nonribosomal peptide synthetase subunit. LpsB and lpsC encode the monomodular subunits responsible for D-lysergic acid activation and incorporation into the ergopeptine backbone. LpsA1 and A2 subunits encode the trimodular nonribosomal peptide synthetase assembling the tripeptide portion of ergopeptines. LpsA1 is responsible for formation of the major ergopeptine, ergotamine, and lpsA2 for alpha-ergocryptine, the minor ergopeptine of the total alkaloid mixture elaborated by C.purpurea. D-lysergyl-tripeptides are assembled by the nonribosomal peptide synthetases and released as N-(D-lysergyl-aminoacyl)-lactams. Cyclolization of the D-lysergyl-tripeptides is performed by the Fe(2+)/2-ketoglutarate-dependent dioxygenase easH which introduces a hydroxyl group into N-(D-lysergyl-aminoacyl)-lactam at alpha-C of the aminoacyl residue followed by spontaneous condensation with the terminal lactam carbonyl group. In Claviceps purpurea (Ergot fungus), this protein is FAD-linked oxidoreductase easE.